The chain runs to 362 residues: Transcription factor Sox-7 (362 aa).

Residues 19–41 form a disordered region; it reads MDGDLSDGLSPHRSPREKGSETR. Over residues 32–41 the composition is skewed to basic and acidic residues; it reads SPREKGSETR. The segment at residues 42–110 is a DNA-binding region (HMG box); it reads IRRPMNAFMV…QHMQDYPNYK (69 aa). In terms of domain architecture, Sox C-terminal spans 246–362; the sequence is QPGSSMIPPV…ATYYNSYSVS (117 aa).

Localized to the vegetal hemisphere of blastula embryos. Tissue-specific expression in early neurula (stage 13-14) embryos begins in the ciliate cells of the epidermis. Starting about stage 24, expression is found in a lateral stripe on each side of the embryo, with expression extending more posteriorly as development proceeds. Expressed in embryonic vasculature, as well as in the procardia tube, endocardium, notochord and hindbrain. As development proceeds, strong expression is seen in the hindbrain, posterior cardinal veins, aortic arch, stomodeal depression, epithelium and intersomitic arteries of stage 33/34 larvae. Expressed in posterior rhombomeres. By stage 40 larvae, expression in most of the vascular endothelia disappears, in particular in the posterior cardinal vein, but expression continues in the hindbrain. Expressed in a wide range of adult tissues, including ovary, testis, kidney, bladder, duodenum and liver.

It localises to the nucleus. Functionally, transcription factor. Binds to the DNA sequence 5'-AACAAT-3'. Acts downstream of vegt and upstream of nodal signaling to promote endodermal and mesodermal differentiation by promoting vegt-induced expression of both endodermal genes (including endodermin) and mesodermal genes (including snai1/snail and snai2/slug). Induces expression of multiple nodal genes (including nodal, nodal2, nodal4, nodal5 and nodal6) and binds directly to sites within the promoter of the nodal5 gene. The endodermal and mesodermal specification pathways then interact to initiate cardiogenesis. Acts partially redundantly with sox18 during cardiogenesis. Also acts as an antagonist of beta-catenin signaling. Regulates (possibly indirectly) development of the pronephros, the functional larval kidney. The sequence is that of Transcription factor Sox-7 (sox7) from Xenopus laevis (African clawed frog).